A 121-amino-acid chain; its full sequence is Large ribosomal subunit protein bL19 (121 aa).

Belongs to the bacterial ribosomal protein bL19 family.

Functionally, this protein is located at the 30S-50S ribosomal subunit interface and may play a role in the structure and function of the aminoacyl-tRNA binding site. The chain is Large ribosomal subunit protein bL19 from Acidothermus cellulolyticus (strain ATCC 43068 / DSM 8971 / 11B).